The chain runs to 385 residues: Telomere-binding protein subunit beta (385 aa).

Disordered stretches follow at residues 231–329 and 343–385; these read AADH…ALTT and WHEK…AAKK. Over residues 242-262 the composition is skewed to basic residues; it reads GGAKGKGKAAAKAAKGKKLSA. The span at 263–280 shows a compositional bias: basic and acidic residues; that stretch reads KKGDSSAADVRKSVDKIV. 3 stretches are compositionally biased toward low complexity: residues 295 to 304, 312 to 326, and 365 to 375; these read KSQAPAAGKS, KAVP…KKSA, and GKASATSGKAS. Residues 376–385 are compositionally biased toward basic residues; sequence KASKKTAAKK.

In terms of assembly, heterodimer of an alpha and a beta subunit.

The protein resides in the nucleus. Its subcellular location is the chromosome. It localises to the telomere. May function as protective capping of the single-stranded telomeric overhang. May also participate in telomere length regulation during DNA replication. Binds specifically to the T4G4-containing extension on the 3'strand and protects this region of the telomere from nuclease digestion and chemical modification. In Sterkiella nova (Ciliate), this protein is Telomere-binding protein subunit beta (MAC-41A).